The chain runs to 270 residues: L-aspartate dehydrogenase (270 aa).

NAD(+)-binding residues include alanine 123 and asparagine 191. The active site involves histidine 221.

This sequence belongs to the L-aspartate dehydrogenase family.

It carries out the reaction L-aspartate + NADP(+) + H2O = oxaloacetate + NH4(+) + NADPH + H(+). The catalysed reaction is L-aspartate + NAD(+) + H2O = oxaloacetate + NH4(+) + NADH + H(+). It functions in the pathway cofactor biosynthesis; NAD(+) biosynthesis; iminoaspartate from L-aspartate (dehydrogenase route): step 1/1. Specifically catalyzes the NAD or NADP-dependent dehydrogenation of L-aspartate to iminoaspartate. This Methanocella arvoryzae (strain DSM 22066 / NBRC 105507 / MRE50) protein is L-aspartate dehydrogenase.